Here is a 540-residue protein sequence, read N- to C-terminus: Phosphoenolpyruvate carboxykinase (ATP) (540 aa).

Arginine 65 is a binding site for substrate. Lysine 87 carries the post-translational modification N6-acetyllysine. Substrate-binding residues include tyrosine 207 and lysine 213. ATP is bound by residues lysine 213, histidine 232, and 248-256 (GLSGTGKTT). The Mn(2+) site is built by lysine 213 and histidine 232. Aspartate 269 serves as a coordination point for Mn(2+). ATP-binding positions include glutamate 297, arginine 333, 449-450 (RI), and threonine 455. Residue arginine 333 participates in substrate binding. Residue lysine 523 is modified to N6-acetyllysine.

The protein belongs to the phosphoenolpyruvate carboxykinase (ATP) family. Monomer. Mn(2+) serves as cofactor.

The protein localises to the cytoplasm. The enzyme catalyses oxaloacetate + ATP = phosphoenolpyruvate + ADP + CO2. It functions in the pathway carbohydrate biosynthesis; gluconeogenesis. Involved in the gluconeogenesis. Catalyzes the conversion of oxaloacetate (OAA) to phosphoenolpyruvate (PEP) through direct phosphoryl transfer between the nucleoside triphosphate and OAA. This chain is Phosphoenolpyruvate carboxykinase (ATP), found in Escherichia coli O127:H6 (strain E2348/69 / EPEC).